Here is a 159-residue protein sequence, read N- to C-terminus: Ribosomal RNA large subunit methyltransferase H (159 aa).

The S-adenosyl-L-methionine site is built by Leu-76 and Gly-108.

It belongs to the RNA methyltransferase RlmH family. As to quaternary structure, homodimer.

Its subcellular location is the cytoplasm. The enzyme catalyses pseudouridine(1915) in 23S rRNA + S-adenosyl-L-methionine = N(3)-methylpseudouridine(1915) in 23S rRNA + S-adenosyl-L-homocysteine + H(+). In terms of biological role, specifically methylates the pseudouridine at position 1915 (m3Psi1915) in 23S rRNA. The chain is Ribosomal RNA large subunit methyltransferase H from Lactiplantibacillus plantarum (strain ATCC BAA-793 / NCIMB 8826 / WCFS1) (Lactobacillus plantarum).